The sequence spans 214 residues: Large ribosomal subunit protein uL4 (214 aa).

The disordered stretch occupies residues Thr56–Lys86. The segment covering Lys71 to Ser85 has biased composition (basic residues).

Belongs to the universal ribosomal protein uL4 family. Part of the 50S ribosomal subunit.

One of the primary rRNA binding proteins, this protein initially binds near the 5'-end of the 23S rRNA. It is important during the early stages of 50S assembly. It makes multiple contacts with different domains of the 23S rRNA in the assembled 50S subunit and ribosome. Functionally, forms part of the polypeptide exit tunnel. The sequence is that of Large ribosomal subunit protein uL4 from Mesomycoplasma hyopneumoniae (strain 232) (Mycoplasma hyopneumoniae).